A 318-amino-acid chain; its full sequence is Biotin synthase (318 aa).

The 223-residue stretch at His36–Asp258 folds into the Radical SAM core domain. [4Fe-4S] cluster-binding residues include Cys54, Cys58, and Cys61. 4 residues coordinate [2Fe-2S] cluster: Cys98, Cys130, Cys190, and Arg262.

It belongs to the radical SAM superfamily. Biotin synthase family. In terms of assembly, homodimer. Requires [4Fe-4S] cluster as cofactor. The cofactor is [2Fe-2S] cluster.

It catalyses the reaction (4R,5S)-dethiobiotin + (sulfur carrier)-SH + 2 reduced [2Fe-2S]-[ferredoxin] + 2 S-adenosyl-L-methionine = (sulfur carrier)-H + biotin + 2 5'-deoxyadenosine + 2 L-methionine + 2 oxidized [2Fe-2S]-[ferredoxin]. The protein operates within cofactor biosynthesis; biotin biosynthesis; biotin from 7,8-diaminononanoate: step 2/2. Its function is as follows. Catalyzes the conversion of dethiobiotin (DTB) to biotin by the insertion of a sulfur atom into dethiobiotin via a radical-based mechanism. This chain is Biotin synthase, found in Gloeobacter violaceus (strain ATCC 29082 / PCC 7421).